We begin with the raw amino-acid sequence, 470 residues long: Pancreatic lipase-related protein 2 (470 aa).

The N-terminal stretch at 1–18 (MMLFVWTTGLLLLATARG) is a signal peptide. C22 and C28 are disulfide-bonded. Residues 94-106 (IHGFIDNGEKDWL) are required for galactolipase activity. A disulfide bridge connects residues C110 and C121. S172 functions as the Nucleophile in the catalytic mechanism. D196 (charge relay system) is an active-site residue. 4 residues coordinate Ca(2+): E207, R210, D212, and D215. A disulfide bond links C257 and C281. The interval 258-280 (EKNIISTIVDVNGFLEGITSLAA) is required for galactolipase activity. The Charge relay system role is filled by H283. 2 disulfides stabilise this stretch: C305/C316 and C319/C324. 2 N-linked (GlcNAc...) asparagine glycosylation sites follow: N354 and N429. Positions 358 to 470 (WRYKVSVTLS…EDVLQSLSPC (113 aa)) constitute a PLAT domain. A disulfide bridge links C454 with C470.

This sequence belongs to the AB hydrolase superfamily. Lipase family. In terms of tissue distribution, pancreas.

It is found in the secreted. The protein resides in the zymogen granule membrane. It localises to the cell projection. The protein localises to the neuron projection. The catalysed reaction is a triacylglycerol + H2O = a diacylglycerol + a fatty acid + H(+). It carries out the reaction a 1,2-diacyl-3-O-(beta-D-galactosyl)-sn-glycerol + 2 H2O = 3-beta-D-galactosyl-sn-glycerol + 2 a fatty acid + 2 H(+). It catalyses the reaction 1,2,3-tri-(9Z-octadecenoyl)-glycerol + H2O = di-(9Z)-octadecenoylglycerol + (9Z)-octadecenoate + H(+). The enzyme catalyses di-(9Z)-octadecenoylglycerol + H2O = (9Z-octadecenoyl)-glycerol + (9Z)-octadecenoate + H(+). The catalysed reaction is (9Z-octadecenoyl)-glycerol + H2O = glycerol + (9Z)-octadecenoate + H(+). It carries out the reaction 1-(9Z-octadecenoyl)-glycerol + H2O = glycerol + (9Z)-octadecenoate + H(+). It catalyses the reaction 1,2,3-tripropanoylglycerol + H2O = dipropanoylglycerol + propanoate + H(+). The enzyme catalyses 1,2,3-tributanoylglycerol + H2O = dibutanoylglycerol + butanoate + H(+). The catalysed reaction is 1,2,3-trioctanoylglycerol + H2O = dioctanoylglycerol + octanoate + H(+). It carries out the reaction 1,2-didecanoylglycerol + H2O = decanoylglycerol + decanoate + H(+). It catalyses the reaction long chain 1,2-diacyl-3-O-beta-D-galactosyl-sn-glycerol + H2O = long chain acyl-3-O-beta-D-galactosyl-sn-glycerol + a fatty acid + H(+). The enzyme catalyses 1,2-dioctanoyl-3-O-beta-D-galactosyl-sn-glycerol + H2O = octanoyl-3-(beta-D-galactosyl)-sn-glycerol + octanoate + H(+). The catalysed reaction is 1,2-didodecanoyl-3-beta-D-galactosyl-sn-glycerol + H2O = dodecanoyl-3-beta-D-galactosyl-sn-glycerol + dodecanoate + H(+). It carries out the reaction 1-beta-D-galactosyl-2,3-didodecanoyl-sn-glycerol + H2O = 1-beta-D-galactosyl-dodecanoyl-sn-glycerol + dodecanoate + H(+). It catalyses the reaction a 1,2-diacyl-3-O-[alpha-D-galactosyl-(1-&gt;6)-beta-D-galactosyl]-sn-glycerol + H2O = acyl-3-O-[alpha-D-galactosyl-(1-&gt;6)-beta-D-galactosyl]-sn-glycerol + a fatty acid + H(+). The enzyme catalyses long chain 1,2-diacyl-3-O-[alpha-D-galactosyl-(1-&gt;6)-beta-D-galactosyl]-sn-glycerol + H2O = long chain acyl-3-O-[alpha-D-galactosyl-(1-&gt;6)-beta-D-galactosyl]-sn-glycerol + a fatty acid + H(+). The catalysed reaction is 1,2-dioctanoyl-3-O-[alpha-D-galactosyl-(1-&gt;6)-beta-D-galactosyl]-sn-glycerol + H2O = octanoyl-3-O-[alpha-D-galactosyl-(1-&gt;6)-beta-D-galactosyl]-sn-glycerol + octanoate + H(+). It carries out the reaction 1,2-didodecanoyl-3-O-[alpha-D-galactosyl-(1-&gt;6)-beta-D-galactosyl]-sn-glycerol + H2O = dodecanoyl-3-O-[alpha-D-galactosyl-(1-&gt;6)-beta-D-galactosyl]-sn-glycerol + dodecanoate + H(+). It catalyses the reaction a 1,2-diacyl-sn-glycero-3-phosphocholine + H2O = a monoacyl-sn-glycero-3-phosphocholine + a fatty acid + H(+). Its pathway is glycerolipid metabolism; triacylglycerol degradation. It participates in glycolipid metabolism. Triacylglycerol lipase activity is inhibited by increasing bile salts concentrations and not reactivated by CLPS. Its function is as follows. Lipase that primarily hydrolyzes triglycerides and galactosylglycerides. In neonates, may play a major role in pancreatic digestion of dietary fats such as milk fat globules enriched in long-chain triglycerides. Hydrolyzes short-, medium- and long-chain fatty acyls in triglycerides without apparent positional specificity. Can completely deacylate triacylglycerols. When the liver matures and bile salt synthesis increases, likely functions mainly as a galactolipase and monoacylglycerol lipase. Hydrolyzes monogalactosyldiglycerols (MGDG) and digalactosyldiacylglycerols (DGDG) present in a plant-based diet, releasing long-chain polyunsaturated fatty acids. Hydrolyzes medium- and long-chain fatty acyls in galactolipids. May act together with LIPF to hydrolyze partially digested triglycerides. Hydrolyzes long-chain monoglycerides with high efficiency. In cytotoxic T cells, contributes to perforin-dependent cell lysis, but is unlikely to mediate direct cytotoxicity. Also has low phospholipase activity. In neurons, required for the localization of the phospholipid 1-oleoyl-2-palmitoyl-PC (OPPC) to neurite tips through acyl chain remodeling of membrane phospholipids. The resulting OPPC-rich lipid membrane domain recruits the t-SNARE protein STX4 by selectively interacting with the STX4 transmembrane domain and this promotes surface expression of the dopamine transporter SLC6A3/DAT at neurite tips by facilitating fusion of SLC6A3-containing transport vesicles with the plasma membrane. The polypeptide is Pancreatic lipase-related protein 2 (Myocastor coypus (Coypu)).